Consider the following 266-residue polypeptide: Translation initiation factor 2 subunit alpha (266 aa).

The S1 motif domain occupies 12 to 83 (GEILIATVKQ…RKGTVDVSLK (72 aa)).

The protein belongs to the eIF-2-alpha family. In terms of assembly, heterotrimer composed of an alpha, a beta and a gamma chain.

Its function is as follows. eIF-2 functions in the early steps of protein synthesis by forming a ternary complex with GTP and initiator tRNA. In Saccharolobus islandicus (strain Y.N.15.51 / Yellowstone #2) (Sulfolobus islandicus), this protein is Translation initiation factor 2 subunit alpha.